Consider the following 325-residue polypeptide: SAM pointed domain-containing Ets transcription factor (325 aa).

Disordered regions lie at residues 27 to 50 (GTEKAASGAMGPEKQEWSPSPPAT) and 79 to 100 (ARAGEDHPEEPEQCPVIDSQAS). In terms of domain architecture, PNT spans 119-203 (EVLKDIETAC…AHLDIWKSAA (85 aa)). A DNA-binding region (ETS) is located at residues 239–322 (IHLWQFLKEL…ISQRLVYQFV (84 aa)).

The protein belongs to the ETS family. Interacts with the DNA-binding domain of the androgen receptor. Interacts with NKX3-1. Expressed in the accessory glands of sex organs including the prostate, seminal vesicle, coagulating gland in males, the oviduct in females, and in intestines. Expression is epithelial-specific.

The protein resides in the nucleus. In terms of biological role, may function as an androgen-independent transactivator of the prostate-specific antigen (PSA) promoter. Binds to 5'-GGAT-3' DNA sequences. May play a role in the regulation of the prostate gland and/or prostate cancer development. Acts as a transcriptional activator for SERPINB5 promoter. In Mus musculus (Mouse), this protein is SAM pointed domain-containing Ets transcription factor (Spdef).